Consider the following 490-residue polypeptide: Protein U94 (490 aa).

In terms of domain architecture, PV NS1-Nuc spans 1–210 (MFSIINPSDD…SHFNKKPNVK (210 aa)).

It localises to the host nucleus. The chain is Protein U94 (U94) from Human herpesvirus 6A (strain Uganda-1102) (HHV-6 variant A).